A 286-amino-acid chain; its full sequence is Pantothenate synthetase (286 aa).

Met30–His37 lines the ATP pocket. His37 acts as the Proton donor in catalysis. Position 64 (Gln64) interacts with (R)-pantoate. Gln64 serves as a coordination point for beta-alanine. Gly151 to Asp154 is a binding site for ATP. Gln157 lines the (R)-pantoate pocket. ATP is bound by residues Leu180 and Leu188–Arg191.

The protein belongs to the pantothenate synthetase family. In terms of assembly, homodimer.

Its subcellular location is the cytoplasm. It catalyses the reaction (R)-pantoate + beta-alanine + ATP = (R)-pantothenate + AMP + diphosphate + H(+). It participates in cofactor biosynthesis; (R)-pantothenate biosynthesis; (R)-pantothenate from (R)-pantoate and beta-alanine: step 1/1. Functionally, catalyzes the condensation of pantoate with beta-alanine in an ATP-dependent reaction via a pantoyl-adenylate intermediate. The protein is Pantothenate synthetase of Leptothrix cholodnii (strain ATCC 51168 / LMG 8142 / SP-6) (Leptothrix discophora (strain SP-6)).